The sequence spans 253 residues: Glucosamine-6-phosphate deaminase (253 aa).

Aspartate 65 serves as the catalytic Proton acceptor; for enolization step. Residue asparagine 133 is the For ring-opening step of the active site. The Proton acceptor; for ring-opening step role is filled by histidine 135. The For ring-opening step role is filled by glutamate 140.

This sequence belongs to the glucosamine/galactosamine-6-phosphate isomerase family. NagB subfamily.

The catalysed reaction is alpha-D-glucosamine 6-phosphate + H2O = beta-D-fructose 6-phosphate + NH4(+). The protein operates within amino-sugar metabolism; N-acetylneuraminate degradation; D-fructose 6-phosphate from N-acetylneuraminate: step 5/5. Catalyzes the reversible isomerization-deamination of glucosamine 6-phosphate (GlcN6P) to form fructose 6-phosphate (Fru6P) and ammonium ion. The protein is Glucosamine-6-phosphate deaminase of Corynebacterium efficiens (strain DSM 44549 / YS-314 / AJ 12310 / JCM 11189 / NBRC 100395).